Consider the following 366-residue polypeptide: Galactoside alpha-(1,2)-fucosyltransferase 1 (366 aa).

Over methionine 1–glutamine 8 the chain is Cytoplasmic. A helical; Signal-anchor for type II membrane protein membrane pass occupies residues leucine 9–phenylalanine 25. At leucine 26–proline 366 the chain is on the lumenal side. N-linked (GlcNAc...) asparagine glycans are attached at residues asparagine 66, asparagine 302, and asparagine 328.

It belongs to the glycosyltransferase 11 family.

Its subcellular location is the golgi apparatus. The protein resides in the golgi stack membrane. It carries out the reaction a beta-D-galactosyl-(1-&gt;4)-N-acetyl-beta-D-glucosaminyl derivative + GDP-beta-L-fucose = an alpha-L-Fuc-(1-&gt;2)-beta-D-Gal-(1-&gt;4)-beta-D-GlcNAc derivative + GDP + H(+). It catalyses the reaction a ganglioside GA1 + GDP-beta-L-fucose = a ganglioside Fuc-GA1 + GDP + H(+). The enzyme catalyses a beta-D-Gal-(1-&gt;3)-beta-D-GlcNAc-(1-&gt;3)-beta-D-Gal-(1-&gt;4)-beta-D-Glc-(1&lt;-&gt;1')-Cer(d18:1(4E)) + GDP-beta-L-fucose = alpha-L-fucosyl-(1-&gt;2)- beta-D-galactosyl-(1-&gt;3)-N-acetyl-beta-D-glucosaminyl-(1-&gt;3)-beta-D-galactosyl-(1-&gt;4)-beta-D-glucosyl-(1&lt;-&gt;1')-N-acylsphing-4-enine + GDP + H(+). The catalysed reaction is a neolactoside nLc4Cer(d18:1(4E)) + GDP-beta-L-fucose = a neolactoside IV(2)-alpha-Fuc-nLc4Cer(d18:1(4E)) + GDP + H(+). It carries out the reaction a ganglioside GM1 + GDP-beta-L-fucose = a ganglioside Fuc-GM1 + GDP + H(+). It catalyses the reaction beta-D-galactosyl-(1-&gt;3)-N-acetyl-D-galactosamine + GDP-beta-L-fucose = alpha-L-fucosyl-(1-&gt;2)-beta-D-galactosyl-(1-&gt;3)-N-acetyl-D-galactosamine + GDP + H(+). The protein operates within protein modification; protein glycosylation. Functionally, catalyzes the transfer of L-fucose, from a guanosine diphosphate-beta-L-fucose, to the terminal galactose residue of glycoconjugates through an alpha(1,2) linkage leading to H antigen synthesis that is an intermediate substrate in the synthesis of ABO blood group antigens. H antigen is essential for maturation of the glomerular layer of the main olfactory bulb, in cell migration and early cell-cell contacts during tumor associated angiogenesis. Preferentially fucosylates soluble lactose and to a lesser extent fucosylates glycolipids gangliosides GA1 and GM1a. The polypeptide is Galactoside alpha-(1,2)-fucosyltransferase 1 (Pan troglodytes (Chimpanzee)).